Reading from the N-terminus, the 195-residue chain is Probable chorismate pyruvate-lyase (195 aa).

3 residues coordinate substrate: Arg79, Leu117, and Glu180.

It belongs to the UbiC family.

The protein resides in the cytoplasm. The enzyme catalyses chorismate = 4-hydroxybenzoate + pyruvate. Its pathway is cofactor biosynthesis; ubiquinone biosynthesis. Its function is as follows. Removes the pyruvyl group from chorismate, with concomitant aromatization of the ring, to provide 4-hydroxybenzoate (4HB) for the ubiquinone pathway. In Ralstonia nicotianae (strain ATCC BAA-1114 / GMI1000) (Ralstonia solanacearum), this protein is Probable chorismate pyruvate-lyase.